Here is a 331-residue protein sequence, read N- to C-terminus: Decarboxylase orsB (331 aa).

Residues H11, H157, and D284 each contribute to the Zn(2+) site.

Belongs to the metallo-dependent hydrolases superfamily. ACMSD family.

It functions in the pathway secondary metabolite biosynthesis. Its function is as follows. Decarboxylase; part of the gene cluster that mediates the biosynthesis of orsellinic acid, as well as of the cathepsin K inhibitors F9775 A and F9775 B. The non-reducing polyketide synthase orsA produces orsellinic acid by condensing acetyl-CoA with 3 malonyl-CoA units. Further modifications by the decarboxylase orsB and the tyrosinase-like protein orsC lead to the production of F9775 A and F9775 B. The functions of orsD and orsE remain unclear since only orsB and orsC are required to convert orsellinic acid into F9775 A and F9775 B. This is Decarboxylase orsB from Emericella nidulans (strain FGSC A4 / ATCC 38163 / CBS 112.46 / NRRL 194 / M139) (Aspergillus nidulans).